Here is a 480-residue protein sequence, read N- to C-terminus: Probable cobyric acid synthase (480 aa).

The GATase cobBQ-type domain maps to 246–431 (PVRIAVIRLP…MHGLFLNPSA (186 aa)). Cys-325 serves as the catalytic Nucleophile. Residue His-423 is part of the active site.

It belongs to the CobB/CobQ family. CobQ subfamily.

The protein operates within cofactor biosynthesis; adenosylcobalamin biosynthesis. Its function is as follows. Catalyzes amidations at positions B, D, E, and G on adenosylcobyrinic A,C-diamide. NH(2) groups are provided by glutamine, and one molecule of ATP is hydrogenolyzed for each amidation. The protein is Probable cobyric acid synthase of Methanoregula boonei (strain DSM 21154 / JCM 14090 / 6A8).